The sequence spans 845 residues: Protein TSD2 (845 aa).

The segment at 193-283 (DVDSDSESDS…SASATRLTNA (91 aa)) is disordered. Basic and acidic residues-rich tracts occupy residues 202 to 212 (SDSHSDSHSDS) and 230 to 242 (ARSHDERQRDGSG). Over residues 243–272 (GKRKRGSHSPLSRRRQRHKQGQRHKPRHRS) the composition is skewed to basic residues.

Belongs to the CDC45 family.

It localises to the nucleus. Temperature-sensitive protein required for DNA synthesis. May be a transcription factor that regulates the level or influences the stability of DNA polymerases or auxiliary proteins. This is Protein TSD2 (TSD2) from Mycosarcoma maydis (Corn smut fungus).